We begin with the raw amino-acid sequence, 187 residues long: Aminodeoxychorismate synthase component 2 (187 aa).

Positions 1-187 (MILLIDNYDS…HQLLANFLHR (187 aa)) constitute a Glutamine amidotransferase type-1 domain. Residues Cys79, His168, and Glu170 contribute to the active site.

Monomer. Heterodimer consisting of two non-identical subunits: a glutamine amidotransferase subunit (PabA) and a aminodeoxychorismate synthase subunit (PabB).

It catalyses the reaction chorismate + L-glutamine = 4-amino-4-deoxychorismate + L-glutamate. Its pathway is cofactor biosynthesis; tetrahydrofolate biosynthesis; 4-aminobenzoate from chorismate: step 1/2. With respect to regulation, inhibited by 6-diazo-5-oxo-L-norleucine (DON). The inhibition is competitive with glutamine, but uncompetitive with chorismate. Its function is as follows. Part of a heterodimeric complex that catalyzes the two-step biosynthesis of 4-amino-4-deoxychorismate (ADC), a precursor of p-aminobenzoate (PABA) and tetrahydrofolate. In the first step, a glutamine amidotransferase (PabA) generates ammonia as a substrate that, along with chorismate, is used in the second step, catalyzed by aminodeoxychorismate synthase (PabB) to produce ADC. PabA converts glutamine into glutamate only in the presence of stoichiometric amounts of PabB. This is Aminodeoxychorismate synthase component 2 from Escherichia coli (strain K12).